Consider the following 130-residue polypeptide: Cyclin-dependent kinase 4 inhibitor B (130 aa).

ANK repeat units follow at residues 5 to 34 (GSDA…DPNA), 38 to 66 (FGRR…EPNC), 71 to 100 (TLTR…RLDV), and 104 to 130 (WGRL…ATGD). Thr12 is subject to Phosphothreonine.

Belongs to the CDKN2 cyclin-dependent kinase inhibitor family. Heterodimer of CDKN2B with CDK4 or CDK6. In terms of tissue distribution, expression abundant in lung, less abundant in testis, barely detectable in liver, and not detectable in neonatal kidney, adult kidney, brain, heart, or spleen.

In terms of biological role, interacts strongly with CDK4 and CDK6. Potent inhibitor. Potential effector of TGF-beta induced cell cycle arrest. This chain is Cyclin-dependent kinase 4 inhibitor B (Cdkn2b), found in Rattus norvegicus (Rat).